The following is a 311-amino-acid chain: Ribosomal RNA small subunit methyltransferase H (311 aa).

S-adenosyl-L-methionine contacts are provided by residues 34-36 (GGH), aspartate 54, phenylalanine 80, aspartate 104, and glutamine 111.

It belongs to the methyltransferase superfamily. RsmH family.

It localises to the cytoplasm. The catalysed reaction is cytidine(1402) in 16S rRNA + S-adenosyl-L-methionine = N(4)-methylcytidine(1402) in 16S rRNA + S-adenosyl-L-homocysteine + H(+). Specifically methylates the N4 position of cytidine in position 1402 (C1402) of 16S rRNA. The polypeptide is Ribosomal RNA small subunit methyltransferase H (Teredinibacter turnerae (strain ATCC 39867 / T7901)).